A 568-amino-acid chain; its full sequence is UPF0313 protein FN0734 (568 aa).

The region spanning Ala289 to Glu562 is the Radical SAM core domain. [4Fe-4S] cluster contacts are provided by Cys303, Cys307, and Cys310. Residues Val546 to Lys568 form a disordered region.

This sequence belongs to the UPF0313 family. [4Fe-4S] cluster is required as a cofactor.

The sequence is that of UPF0313 protein FN0734 from Fusobacterium nucleatum subsp. nucleatum (strain ATCC 25586 / DSM 15643 / BCRC 10681 / CIP 101130 / JCM 8532 / KCTC 2640 / LMG 13131 / VPI 4355).